Here is a 615-residue protein sequence, read N- to C-terminus: Pentatricopeptide repeat-containing protein At2g25580 (615 aa).

The interval 40–98 is disordered; the sequence is FGNSNDSSEMNPREGYNGRIQNRTGSSGEVSESIHTQSQSLGSNQGRNEQSWKQSPSLS. Positions 58–98 are enriched in polar residues; sequence RIQNRTGSSGEVSESIHTQSQSLGSNQGRNEQSWKQSPSLS. PPR repeat units lie at residues 288-318, 319-353, 354-389, and 390-420; these read DLSSNHVLLEMYSNCGLANEAASVFEKMSEK, NLETWCIIIRCFAKNGFGEDAIDMFSRFKEEGNIP, DGQLFRGIFYACGMLGDVDEGLLHFESMSRDYGIAP, and SIEDYVSLVEMYALPGFLDEALEFVERMPME. The type E(+) motif stretch occupies residues 490–520; sequence SSMQEFRAGDTNLPENDELFQLLRNLKMHMV. The interval 521–615 is type DYW motif; the sequence is EVGYVAETRM…NGACTCKDYW (95 aa).

It belongs to the PPR family. PCMP-H subfamily.

The polypeptide is Pentatricopeptide repeat-containing protein At2g25580 (PCMP-H75) (Arabidopsis thaliana (Mouse-ear cress)).